The sequence spans 194 residues: Peptidyl-tRNA hydrolase (194 aa).

Position 19 (Tyr19) interacts with tRNA. His24 serves as the catalytic Proton acceptor. The tRNA site is built by Phe69, Asn71, and Asn117.

It belongs to the PTH family. In terms of assembly, monomer.

The protein resides in the cytoplasm. It catalyses the reaction an N-acyl-L-alpha-aminoacyl-tRNA + H2O = an N-acyl-L-amino acid + a tRNA + H(+). In terms of biological role, hydrolyzes ribosome-free peptidyl-tRNAs (with 1 or more amino acids incorporated), which drop off the ribosome during protein synthesis, or as a result of ribosome stalling. Its function is as follows. Catalyzes the release of premature peptidyl moieties from peptidyl-tRNA molecules trapped in stalled 50S ribosomal subunits, and thus maintains levels of free tRNAs and 50S ribosomes. The protein is Peptidyl-tRNA hydrolase of Neorickettsia sennetsu (strain ATCC VR-367 / Miyayama) (Ehrlichia sennetsu).